Here is a 496-residue protein sequence, read N- to C-terminus: MTELLSREEYAAIAATLDLPQRAFIDGGFRDACGGRTFASTNPATGELLAQVAACDAEDVGHAVASARRAFEDGRWRSRTPAERKAALLRLAELLEEHLLELAVMESLDSGKPIRECQHTDLPETINTLRWHAELIDKIYDSTAPVGSAALAMVVREPIGVVGLVLPWNFPLLMLAWKIGPALAAGCSVVVKPAPETSLTALRVAELASQAGIPAGVFNVVPGGGREAGEPLGRHPDVAMVSFTGSTATGRLFLKYAAESNLKRVVLECGGKNPAVVMNDVEDLDLVAQHVVNGAFWNMGENCSASSRLIVHAEVREALLERIGAQLREWRMGDPLDPRNRLGALVSPAHFEKVRAYLDQARTERLAVRFGGATEAGIFVEPTVVDGVSPHSRLFREEIFGPLLSVTSFDDIDEAIALANDTVYGLAASAYTGSLRHALRLSREIRAGIVTVNCFGEGDASTPFGGYKESGFGGRDKSVWAHDQYTELKTIWIDAS.

NADH-binding residues include leucine 166, tryptophan 168, lysine 192, serine 246, threonine 249, and tyrosine 256. Residue glutamate 268 is the Proton acceptor of the active site. NADH is bound at residue cysteine 269. The active-site Nucleophile is cysteine 303. The NADH site is built by lysine 353 and glutamate 398.

The protein belongs to the aldehyde dehydrogenase family. In terms of assembly, homotetramer, formed by two symmetrical dimers.

The catalysed reaction is aminoacetaldehyde + NAD(+) + H2O = glycine + NADH + 2 H(+). It carries out the reaction 3-aminopropanal + NAD(+) + H2O = beta-alanine + NADH + 2 H(+). NAD(+)-dependent aminoaldehyde dehydrogenase highly efficient with protonated aminoacetaldehyde (ACTAL) and 3-aminopropanaldehyde (APAL). Likely participates in a still uncharacterized metabolic pathway present in proteobacteria species, in which ACTAL might be an intermediate, yielding glycine. Highly prefers NAD(+) over NADP(+). Shows very poor activity with acetaldehyde, propanaldehyde, butanaldehyde, pentanaldehyde, dimethylaminoacetaldehyde, trimethylaminoacetaldehyde (betaine aldehyde), trimethylaminobutanaldehyde, short aliphatic hydroxyaldehydes such as 3-hydroxypropanaldehyde and 2-hydroxypropanaldehyde (lactaldehyde), and aromatic aldehydes. The chain is Aminoacetaldehyde dehydrogenase from Pseudomonas aeruginosa (strain ATCC 15692 / DSM 22644 / CIP 104116 / JCM 14847 / LMG 12228 / 1C / PRS 101 / PAO1).